A 312-amino-acid chain; its full sequence is Ribosomal protein L11 methyltransferase (312 aa).

The S-adenosyl-L-methionine site is built by Thr160, Gly181, Asp203, and Asn246.

The protein belongs to the methyltransferase superfamily. PrmA family.

It localises to the cytoplasm. The catalysed reaction is L-lysyl-[protein] + 3 S-adenosyl-L-methionine = N(6),N(6),N(6)-trimethyl-L-lysyl-[protein] + 3 S-adenosyl-L-homocysteine + 3 H(+). In terms of biological role, methylates ribosomal protein L11. The protein is Ribosomal protein L11 methyltransferase of Staphylococcus saprophyticus subsp. saprophyticus (strain ATCC 15305 / DSM 20229 / NCIMB 8711 / NCTC 7292 / S-41).